The primary structure comprises 1024 residues: Beta-galactosidase (1024 aa).

Residues Asn-103 and Asp-202 each contribute to the substrate site. Position 202 (Asp-202) interacts with Na(+). Mg(2+)-binding residues include Glu-417, His-419, and Glu-462. Residues Glu-462 and 538–541 (EYAH) contribute to the substrate site. The active-site Proton donor is the Glu-462. The active-site Nucleophile is the Glu-538. Position 598 (Asn-598) interacts with Mg(2+). Na(+) contacts are provided by Phe-602 and Asn-605. Residues Asn-605 and Trp-1000 each coordinate substrate.

This sequence belongs to the glycosyl hydrolase 2 family. Homotetramer. Mg(2+) serves as cofactor. Requires Na(+) as cofactor.

The catalysed reaction is Hydrolysis of terminal non-reducing beta-D-galactose residues in beta-D-galactosides.. The polypeptide is Beta-galactosidase (Klebsiella pneumoniae).